Reading from the N-terminus, the 349-residue chain is Thiamine-phosphate synthase (349 aa).

The tract at residues 1–125 (MGCESSLDPR…SAEAAAIRYG (125 aa)) is unknown. A disordered region spans residues 63–85 (RARSTVTDPGAGMEHPAQLDRHS). The interval 126 to 349 (LYDLEVTCLT…LLSSLSRPTL (224 aa)) is thiamine-phosphate synthase. Residues 177–181 (QHRCK) and N209 contribute to the 4-amino-2-methyl-5-(diphosphooxymethyl)pyrimidine site. Residues D210 and D229 each coordinate Mg(2+). 2 residues coordinate 4-amino-2-methyl-5-(diphosphooxymethyl)pyrimidine: S248 and K277. Position 304 (G304) interacts with 2-[(2R,5Z)-2-carboxy-4-methylthiazol-5(2H)-ylidene]ethyl phosphate.

Belongs to the thiamine-phosphate synthase family. Requires Mg(2+) as cofactor.

The enzyme catalyses 2-[(2R,5Z)-2-carboxy-4-methylthiazol-5(2H)-ylidene]ethyl phosphate + 4-amino-2-methyl-5-(diphosphooxymethyl)pyrimidine + 2 H(+) = thiamine phosphate + CO2 + diphosphate. It carries out the reaction 2-(2-carboxy-4-methylthiazol-5-yl)ethyl phosphate + 4-amino-2-methyl-5-(diphosphooxymethyl)pyrimidine + 2 H(+) = thiamine phosphate + CO2 + diphosphate. It catalyses the reaction 4-methyl-5-(2-phosphooxyethyl)-thiazole + 4-amino-2-methyl-5-(diphosphooxymethyl)pyrimidine + H(+) = thiamine phosphate + diphosphate. The protein operates within cofactor biosynthesis; thiamine diphosphate biosynthesis; thiamine phosphate from 4-amino-2-methyl-5-diphosphomethylpyrimidine and 4-methyl-5-(2-phosphoethyl)-thiazole: step 1/1. Its function is as follows. Condenses 4-methyl-5-(beta-hydroxyethyl)thiazole monophosphate (THZ-P) and 2-methyl-4-amino-5-hydroxymethyl pyrimidine pyrophosphate (HMP-PP) to form thiamine monophosphate (TMP). This Parasynechococcus marenigrum (strain WH8102) protein is Thiamine-phosphate synthase.